We begin with the raw amino-acid sequence, 990 residues long: Fibronectin-binding protein A (990 aa).

Positions methionine 1 to alanine 35 are cleaved as a signal peptide. A YSIRK-G/S signaling motif motif is present at residues tyrosine 7–serine 18. 2 disordered regions span residues lysine 33–glutamine 61 and proline 96–lysine 193. Residues threonine 37 to asparagine 55 are compositionally biased toward polar residues. The segment at threonine 37–asparagine 511 is ligand-binding A region. Basic and acidic residues-rich tracts occupy residues threonine 112–valine 126 and aspartate 179–lysine 193. The interval glycine 194–asparagine 511 is fibrinogen/elastin/tropoelastin-binding. A fibronectin-binding region spans residues glycine 512 to threonine 834. Residues glutamate 545–isoleucine 574 form a B-1 repeat. Positions glutamate 545–serine 604 are 2 X approximate tandem repeats. The B-2 repeat unit spans residues glutamate 575–serine 604. The disordered stretch occupies residues leucine 702 to phenylalanine 969. Residues glycine 707 to glutamine 744 form a D-1 repeat. The 4 X approximate tandem repeats stretch occupies residues glycine 707–threonine 850. The segment covering proline 741–serine 752 has biased composition (polar residues). Residues glycine 745 to histidine 782 form a D-2 repeat. The stretch at glycine 783–serine 821 is one D-3 repeat. A compositionally biased stretch (basic and acidic residues) spans lysine 786–proline 800. A D-4; truncated repeat occupies glycine 822–threonine 850. Residues proline 836 to proline 910 are compositionally biased toward pro residues. 5 WR repeats span residues proline 851–threonine 864, proline 865–threonine 878, proline 879–threonine 892, proline 893–lysine 906, and proline 907–lysine 920. Positions proline 851–lysine 920 are 5 X tandem repeats, Pro-rich (WR). The LPXTG sorting signal motif lies at leucine 954–glycine 958. Threonine 957 is subject to Pentaglycyl murein peptidoglycan amidated threonine. Residues glycine 958–alanine 990 constitute a propeptide, removed by sortase.

It localises to the secreted. The protein resides in the cell wall. Its function is as follows. Promotes bacterial attachment to multiple substrates, such as fibronectin (Fn), fibrinogen (Fg), elastin peptides and tropoelastin. This confers to S.aureus the ability to invade endothelial cells. Promotes adherence to and aggregation of activated platelets. The sequence is that of Fibronectin-binding protein A (fnbA) from Staphylococcus aureus (strain bovine RF122 / ET3-1).